Consider the following 264-residue polypeptide: Thiazole synthase (264 aa).

Lys-106 serves as the catalytic Schiff-base intermediate with DXP. 1-deoxy-D-xylulose 5-phosphate is bound by residues Gly-167, 193-194 (AG), and 215-216 (NS).

Belongs to the ThiG family. In terms of assembly, homotetramer. Forms heterodimers with either ThiH or ThiS.

It is found in the cytoplasm. The enzyme catalyses [ThiS sulfur-carrier protein]-C-terminal-Gly-aminoethanethioate + 2-iminoacetate + 1-deoxy-D-xylulose 5-phosphate = [ThiS sulfur-carrier protein]-C-terminal Gly-Gly + 2-[(2R,5Z)-2-carboxy-4-methylthiazol-5(2H)-ylidene]ethyl phosphate + 2 H2O + H(+). The protein operates within cofactor biosynthesis; thiamine diphosphate biosynthesis. Functionally, catalyzes the rearrangement of 1-deoxy-D-xylulose 5-phosphate (DXP) to produce the thiazole phosphate moiety of thiamine. Sulfur is provided by the thiocarboxylate moiety of the carrier protein ThiS. In vitro, sulfur can be provided by H(2)S. This Pseudomonas savastanoi pv. phaseolicola (strain 1448A / Race 6) (Pseudomonas syringae pv. phaseolicola (strain 1448A / Race 6)) protein is Thiazole synthase.